A 1416-amino-acid polypeptide reads, in one-letter code: DNA-directed RNA polymerase subunit beta' (1416 aa).

Zn(2+) is bound by residues Cys71, Cys73, Cys86, and Cys89. Mg(2+) is bound by residues Asp461, Asp463, and Asp465. Cys815, Cys892, Cys899, and Cys902 together coordinate Zn(2+).

Belongs to the RNA polymerase beta' chain family. The RNAP catalytic core consists of 2 alpha, 1 beta, 1 beta' and 1 omega subunit. When a sigma factor is associated with the core the holoenzyme is formed, which can initiate transcription. The cofactor is Mg(2+). Requires Zn(2+) as cofactor.

The enzyme catalyses RNA(n) + a ribonucleoside 5'-triphosphate = RNA(n+1) + diphosphate. In terms of biological role, DNA-dependent RNA polymerase catalyzes the transcription of DNA into RNA using the four ribonucleoside triphosphates as substrates. This chain is DNA-directed RNA polymerase subunit beta', found in Blochmanniella pennsylvanica (strain BPEN).